A 323-amino-acid chain; its full sequence is PTS system mannose-specific EIIAB component (323 aa).

The PTS EIIA type-4 domain occupies 2-124 (TIAIVIGTHG…VALAVETGRE (123 aa)). Residue His10 is the Tele-phosphohistidine intermediate; for EIIA activity of the active site. His10 is modified (phosphohistidine; by HPr). Lys55 carries the N6-acetyllysine modification. Positions 137–155 (AAPAPAAAAPKAAPTPAKP) are hinge. The PTS EIIB type-4 domain occupies 157 to 320 (GPNDYMVIGL…KLKMMDLISK (164 aa)). Residue His175 is the Pros-phosphohistidine intermediate; for EIIB activity of the active site. His175 bears the Phosphohistidine; by EIIA mark. Lys234 is subject to N6-acetyllysine.

As to quaternary structure, homodimer.

It is found in the cytoplasm. The protein localises to the cell inner membrane. It catalyses the reaction D-mannose(out) + N(pros)-phospho-L-histidyl-[protein] = D-mannose 6-phosphate(in) + L-histidyl-[protein]. In terms of biological role, the phosphoenolpyruvate-dependent sugar phosphotransferase system (sugar PTS), a major carbohydrate active transport system, catalyzes the phosphorylation of incoming sugar substrates concomitantly with their translocation across the cell membrane. The enzyme II ManXYZ PTS system is involved in mannose transport. The polypeptide is PTS system mannose-specific EIIAB component (manX) (Escherichia coli O157:H7).